The following is a 1060-amino-acid chain: Probable serine/threonine-protein kinase MARK-A (1060 aa).

2 stretches are compositionally biased toward basic and acidic residues: residues 1-11 (METLKEEEQFR) and 23-37 (HLKE…EREQ). Disordered stretches follow at residues 1-52 (METL…LQLQ) and 67-88 (NKIP…SISV). Low complexity-rich tracts occupy residues 38–52 (QQQQ…LQLQ) and 68–88 (KIPS…SISV). In terms of domain architecture, Protein kinase spans 109 to 361 (YLVIKTIGRG…MEEIINHPWL (253 aa)). ATP is bound by residues 115–123 (IGRGQFGKV) and Lys-139. Asp-232 functions as the Proton acceptor in the catalytic mechanism. Residues 409–475 (INNINNTMAT…TTTTNATTTT (67 aa)) show a composition bias toward low complexity. Disordered regions lie at residues 409–488 (INNI…NNEE), 560–701 (GENS…SPLC), 714–886 (LREK…PVHS), and 899–966 (DDKS…QEPR). A UBA domain is found at 488–528 (ELDQEIIEELVGLGFEREELCNSIRQNKYNDAASTYFLLQG). Over residues 577-594 (TVDSPKSTNTPQYRSSNT) the composition is skewed to polar residues. 4 stretches are compositionally biased toward low complexity: residues 603-613 (QQQQQQQQQQQ), 620-637 (QQQN…NNHN), 650-699 (STTV…NPSP), and 720-760 (TTTN…TSPN). Residues 761 to 770 (LQPFSLASTA) show a composition bias toward polar residues. Composition is skewed to low complexity over residues 771-799 (NNNN…SLNS) and 811-831 (QQQQ…NSSS). Basic and acidic residues predominate over residues 837–846 (QRQESRKLED). Composition is skewed to low complexity over residues 904–926 (NSSS…TNNT) and 935–965 (QNSN…QQEP). The KA1 domain maps to 1008-1057 (IECETEGVRFSIEICRLPRLSVNGLKFKRIGGSSWRYKSICKDLLSQMKL).

The protein belongs to the protein kinase superfamily. CAMK Ser/Thr protein kinase family. SNF1 subfamily.

The catalysed reaction is L-seryl-[protein] + ATP = O-phospho-L-seryl-[protein] + ADP + H(+). The enzyme catalyses L-threonyl-[protein] + ATP = O-phospho-L-threonyl-[protein] + ADP + H(+). In Dictyostelium discoideum (Social amoeba), this protein is Probable serine/threonine-protein kinase MARK-A (mrkA).